Consider the following 212-residue polypeptide: Probable transaldolase (212 aa).

Lysine 83 functions as the Schiff-base intermediate with substrate in the catalytic mechanism.

The protein belongs to the transaldolase family. Type 3B subfamily.

The protein resides in the cytoplasm. It catalyses the reaction D-sedoheptulose 7-phosphate + D-glyceraldehyde 3-phosphate = D-erythrose 4-phosphate + beta-D-fructose 6-phosphate. Its pathway is carbohydrate degradation; pentose phosphate pathway; D-glyceraldehyde 3-phosphate and beta-D-fructose 6-phosphate from D-ribose 5-phosphate and D-xylulose 5-phosphate (non-oxidative stage): step 2/3. Transaldolase is important for the balance of metabolites in the pentose-phosphate pathway. The chain is Probable transaldolase (tal) from Halalkalibacterium halodurans (strain ATCC BAA-125 / DSM 18197 / FERM 7344 / JCM 9153 / C-125) (Bacillus halodurans).